The chain runs to 464 residues: Glycine--tRNA ligase (464 aa).

Substrate-binding residues include R104 and E175. Residues 207-209 (RNE), 217-222 (FRTREF), 292-293 (EL), and 336-339 (GVNR) each bind ATP. 222–226 (FEQME) provides a ligand contact to substrate. Residue 332–336 (EPALG) coordinates substrate.

The protein belongs to the class-II aminoacyl-tRNA synthetase family. In terms of assembly, homodimer.

It localises to the cytoplasm. The catalysed reaction is tRNA(Gly) + glycine + ATP = glycyl-tRNA(Gly) + AMP + diphosphate. Catalyzes the attachment of glycine to tRNA(Gly). This chain is Glycine--tRNA ligase, found in Leptospira interrogans serogroup Icterohaemorrhagiae serovar copenhageni (strain Fiocruz L1-130).